The following is a 90-amino-acid chain: Mitochondrial import inner membrane translocase subunit Tim10 (90 aa).

Positions Cys-29–Cys-54 match the Twin CX3C motif motif. Intrachain disulfides connect Cys-29/Cys-54 and Cys-33/Cys-50.

The protein belongs to the small Tim family. In terms of assembly, heterohexamer; composed of 3 copies of TIMM9 and 3 copies of TIMM10/TIM10A, named soluble 70 kDa complex. The complex forms a 6-bladed alpha-propeller structure and associates with the TIMM22 component of the TIM22 complex. Interacts with multi-pass transmembrane proteins in transit. Also forms a complex composed of TIMM9, TIMM10/TIM10A and FXC1/TIM10B.

It is found in the mitochondrion inner membrane. Its function is as follows. Mitochondrial intermembrane chaperone that participates in the import and insertion of multi-pass transmembrane proteins into the mitochondrial inner membrane. May also be required for the transfer of beta-barrel precursors from the TOM complex to the sorting and assembly machinery (SAM complex) of the outer membrane. Acts as a chaperone-like protein that protects the hydrophobic precursors from aggregation and guide them through the mitochondrial intermembrane space. In Rattus norvegicus (Rat), this protein is Mitochondrial import inner membrane translocase subunit Tim10 (Timm10).